Here is a 434-residue protein sequence, read N- to C-terminus: Enolase (434 aa).

Residues 29 to 56 (SGHTGRAAVPSGASTGSREALEMRDGDK) are disordered. Basic and acidic residues predominate over residues 47 to 56 (EALEMRDGDK). Glutamine 163 lines the (2R)-2-phosphoglycerate pocket. Glutamate 205 (proton donor) is an active-site residue. Mg(2+)-binding residues include aspartate 242, glutamate 285, and aspartate 312. (2R)-2-phosphoglycerate-binding residues include lysine 337, arginine 366, serine 367, and lysine 388. Lysine 337 acts as the Proton acceptor in catalysis.

This sequence belongs to the enolase family. Homooctamer. Mg(2+) serves as cofactor.

The protein resides in the cytoplasm. It localises to the secreted. The protein localises to the cell surface. The enzyme catalyses (2R)-2-phosphoglycerate = phosphoenolpyruvate + H2O. Its pathway is carbohydrate degradation; glycolysis; pyruvate from D-glyceraldehyde 3-phosphate: step 4/5. Functionally, catalyzes the reversible conversion of 2-phosphoglycerate (2-PG) into phosphoenolpyruvate (PEP). It is essential for the degradation of carbohydrates via glycolysis. The polypeptide is Enolase (Nitratidesulfovibrio vulgaris (strain DSM 19637 / Miyazaki F) (Desulfovibrio vulgaris)).